Reading from the N-terminus, the 203-residue chain is Protein-methionine-sulfoxide reductase heme-binding subunit MsrQ (203 aa).

5 helical membrane passes run 13 to 33, 79 to 99, 116 to 136, 147 to 167, and 169 to 189; these read IAIW…INLG, LLGL…SILE, PYLT…LTST, WQKL…HYLW, and VKTL…LLLL.

It belongs to the MsrQ family. Heterodimer of a catalytic subunit (MsrP) and a heme-binding subunit (MsrQ). The cofactor is FMN. Requires heme b as cofactor.

Its subcellular location is the cell inner membrane. Its function is as follows. Part of the MsrPQ system that repairs oxidized periplasmic proteins containing methionine sulfoxide residues (Met-O), using respiratory chain electrons. Thus protects these proteins from oxidative-stress damage caused by reactive species of oxygen and chlorine generated by the host defense mechanisms. MsrPQ is essential for the maintenance of envelope integrity under bleach stress, rescuing a wide series of structurally unrelated periplasmic proteins from methionine oxidation. MsrQ provides electrons for reduction to the reductase catalytic subunit MsrP, using the quinone pool of the respiratory chain. In Yersinia pseudotuberculosis serotype O:1b (strain IP 31758), this protein is Protein-methionine-sulfoxide reductase heme-binding subunit MsrQ.